Consider the following 651-residue polypeptide: Probable potassium transport system protein Kup 3 (651 aa).

Helical transmembrane passes span phenylalanine 38 to leucine 58, valine 77 to lysine 97, leucine 129 to threonine 149, proline 166 to valine 186, phenylalanine 197 to isoleucine 217, isoleucine 242 to alanine 262, tryptophan 276 to leucine 296, leucine 314 to isoleucine 334, isoleucine 366 to phenylalanine 386, tyrosine 396 to tryptophan 416, tryptophan 421 to phenylalanine 441, and leucine 448 to threonine 468.

The protein belongs to the HAK/KUP transporter (TC 2.A.72) family.

It is found in the cell inner membrane. The enzyme catalyses K(+)(in) + H(+)(in) = K(+)(out) + H(+)(out). Functionally, transport of potassium into the cell. Likely operates as a K(+):H(+) symporter. This Rhodopseudomonas palustris (strain ATCC BAA-98 / CGA009) protein is Probable potassium transport system protein Kup 3.